The primary structure comprises 591 residues: CTP synthase 1-A (591 aa).

One can recognise a Glutamine amidotransferase type-1 domain in the interval 300 to 554; the sequence is SIALVGKYTK…LASVGRLSQY (255 aa). Active-site for GATase activity residues include Cys399, His526, and Glu528.

Belongs to the CTP synthase family.

The catalysed reaction is UTP + L-glutamine + ATP + H2O = CTP + L-glutamate + ADP + phosphate + 2 H(+). The protein operates within pyrimidine metabolism; CTP biosynthesis via de novo pathway; CTP from UDP: step 2/2. This enzyme is involved in the de novo synthesis of CTP, a precursor of DNA, RNA and phospholipids. Catalyzes the ATP-dependent amination of UTP to CTP with either L-glutamine or ammonia as a source of nitrogen. The polypeptide is CTP synthase 1-A (ctps1-a) (Xenopus laevis (African clawed frog)).